The primary structure comprises 181 residues: 6,7-dimethyl-8-ribityllumazine synthase (181 aa).

5-amino-6-(D-ribitylamino)uracil-binding positions include Y27, 58 to 60, and 87 to 89; these read ALE and CVI. 92–93 serves as a coordination point for (2S)-2-hydroxy-3-oxobutyl phosphate; it reads ET. The active-site Proton donor is the H95. N120 lines the 5-amino-6-(D-ribitylamino)uracil pocket. R134 contacts (2S)-2-hydroxy-3-oxobutyl phosphate.

It belongs to the DMRL synthase family.

It catalyses the reaction (2S)-2-hydroxy-3-oxobutyl phosphate + 5-amino-6-(D-ribitylamino)uracil = 6,7-dimethyl-8-(1-D-ribityl)lumazine + phosphate + 2 H2O + H(+). It participates in cofactor biosynthesis; riboflavin biosynthesis; riboflavin from 2-hydroxy-3-oxobutyl phosphate and 5-amino-6-(D-ribitylamino)uracil: step 1/2. In terms of biological role, catalyzes the formation of 6,7-dimethyl-8-ribityllumazine by condensation of 5-amino-6-(D-ribitylamino)uracil with 3,4-dihydroxy-2-butanone 4-phosphate. This is the penultimate step in the biosynthesis of riboflavin. The chain is 6,7-dimethyl-8-ribityllumazine synthase from Methylobacterium nodulans (strain LMG 21967 / CNCM I-2342 / ORS 2060).